The sequence spans 358 residues: MKPFPRAEISSSALQNNLAVLRQQASASQVMAVVKANGYGHGLLNVANCLVNADGFGLARLEEALELRAGGVKARLLLLEGFFRSTDLPLLVAHDIDTVVHHESQIEMLEQVKLTKPVTVWLKVDSGMHRLGVTPEQFATVYARLMACPNIAKPIHLMTHFACADEPDNHYTDVQMAAFNELTAGLPGFRTLANSAGALYWPKSQGDWIRPGIALYGVSPVAGDCGTNHGLIPAMNLVSRLIAVRDHKANQPVGYGCYWTAKQDTRLGVVAIGYGDGYPRNAPEGTPVWVNGRRVPIVGRVSMDMLTVDLGQDATDKVGDDVLLWGQDLPVEEVAERIGTIAYELVTKLTPRVAVCLA.

K35 serves as the catalytic Proton acceptor; specific for D-alanine. K35 bears the N6-(pyridoxal phosphate)lysine mark. A substrate-binding site is contributed by R130. Y255 (proton acceptor; specific for L-alanine) is an active-site residue. M303 serves as a coordination point for substrate.

The protein belongs to the alanine racemase family. Pyridoxal 5'-phosphate is required as a cofactor.

The enzyme catalyses L-alanine = D-alanine. The protein operates within amino-acid biosynthesis; D-alanine biosynthesis; D-alanine from L-alanine: step 1/1. In terms of biological role, catalyzes the interconversion of L-alanine and D-alanine. May also act on other amino acids. The polypeptide is Alanine racemase (alr) (Shewanella putrefaciens (strain CN-32 / ATCC BAA-453)).